The chain runs to 1951 residues: [F-actin]-monooxygenase MICAL2 (1951 aa).

Positions 2-494 (GENEDEKQAQ…KHLYITKEMD (493 aa)) are monooxygenase domain. FAD is bound by residues C97, 116–118 (EKR), 123–125 (RNN), F183, Y298, and D398. Residues 516–619 (DIRPNKLLTW…MVMYLSKFYE (104 aa)) form the Calponin-homology (CH) domain. Position 631 is a phosphoserine (S631). The Nuclear localization signal signature appears at 660 to 681 (RKRTPRVDTQTEENDMNKRRRQ). Disordered regions lie at residues 663 to 712 (TPRV…SQNK) and 891 to 921 (KRVPHAHPPSPPSCLPSPHPAAASSPPAADS). The span at 691-700 (SFSSRSLGSS) shows a compositional bias: low complexity. Residues 896–909 (AHPPSPPSCLPSPH) show a composition bias toward pro residues. The segment covering 910 to 921 (PAAASSPPAADS) has biased composition (low complexity). The 63-residue stretch at 991–1053 (DTCYFCKKRV…KPHFVHCKTS (63 aa)) folds into the LIM zinc-binding domain. Zn(2+)-binding residues include C993, C996, H1014, C1017, C1020, C1023, C1043, and H1046. Phosphoserine is present on T1052. Disordered stretches follow at residues 1054-1141 (SKQR…RISP), 1158-1314 (TSED…VSPT), 1348-1368 (VEPGRESLRSPEEISSSEGCQ), 1383-1427 (ILGK…RKLG), 1451-1476 (HKTGEQLSQESAENIRGGSLKPTCSS), 1489-1580 (QKKA…AKKA), 1594-1624 (AQASDLSLPNSILRSRSLPSRPSKMFFSTTP), 1678-1697 (GDFFNSPKEEGPPGNRVPSL), 1706-1731 (STSMGQVAHPSSTGQDARKLEGGEGG), and 1747-1766 (PVTEATSSPTSSSAEEEADS). Basic and acidic residues predominate over residues 1061–1070 (AELNQQREEE). Polar residues-rich tracts occupy residues 1129–1138 (PRPSEWTSVR), 1228–1239 (HSLQSPTPSKYQ), and 1246–1256 (QSNSTPMNQRA). Positions 1257 to 1268 (PSPPKEPPPPPS) are enriched in pro residues. The span at 1269–1285 (LSSSSSLPSSFSSASVP) shows a compositional bias: low complexity. Positions 1291 to 1306 (DSSSPQVTYNLHSPQI) are enriched in polar residues. The tract at residues 1314-1353 (TPIYLRRARAQGIVKEIPLYLPHSPMLESTEDCLVEPGRE) is interaction with MAPK1. The span at 1350 to 1359 (PGRESLRSPE) shows a compositional bias: basic and acidic residues. A compositionally biased stretch (basic and acidic residues) spans 1532–1545 (EAGKKTSPKPESKT). A compositionally biased stretch (low complexity) spans 1599–1616 (LSLPNSILRSRSLPSRPS). The span at 1678–1688 (GDFFNSPKEEG) shows a compositional bias: basic and acidic residues. Position 1683 is a phosphoserine (S1683). The segment covering 1706 to 1720 (STSMGQVAHPSSTGQ) has biased composition (polar residues). Residues 1749–1759 (TEATSSPTSSS) are compositionally biased toward low complexity. The bMERB domain occupies 1789 to 1939 (KQEELKRLHK…ERTQDQHFEN (151 aa)).

The protein belongs to the Mical family. Interacts with PLXNA4. Interacts with RAB1B. Interacts with MAPK1/ERK2. Interacts with RAB1B, RAB35, RAB8A, RAB10, RAB13 and RAB15 (in their GTP-bound forms); binding to RAB1B and RAB35 is of low affinity compared to other Rab proteins; binding to RAB1B and RAB35 is of low affinity compared to other Rab proteins; at least in case of RAB8A may bind 2 molecules of RAB8A simultaneously through a high and a low affinity binding site, respectively. FAD serves as cofactor. Expressed only in testis (at protein level).

Its subcellular location is the cytoplasm. The protein resides in the nucleus. It catalyses the reaction L-methionyl-[F-actin] + NADPH + O2 + H(+) = L-methionyl-(R)-S-oxide-[F-actin] + NADP(+) + H2O. Functionally, methionine monooxygenase that promotes depolymerization of F-actin by mediating oxidation of residues 'Met-44' and 'Met-47' on actin to form methionine-sulfoxide, resulting in actin filament disassembly and preventing repolymerization. Regulates the disassembly of branched actin networks also by oxidizing ARP3B-containing ARP2/3 complexes leading to ARP3B dissociation from the network. Acts as a key regulator of the SRF signaling pathway elicited by nerve growth factor and serum: mediates oxidation and subsequent depolymerization of nuclear actin, leading to increase MKL1/MRTF-A presence in the nucleus and promote SRF:MKL1/MRTF-A-dependent gene transcription. Does not activate SRF:MKL1/MRTF-A through RhoA. The polypeptide is [F-actin]-monooxygenase MICAL2 (Mus musculus (Mouse)).